A 122-amino-acid chain; its full sequence is Large ribosomal subunit protein uL14 (122 aa).

It belongs to the universal ribosomal protein uL14 family. In terms of assembly, part of the 50S ribosomal subunit. Forms a cluster with proteins L3 and L19. In the 70S ribosome, L14 and L19 interact and together make contacts with the 16S rRNA in bridges B5 and B8.

Its function is as follows. Binds to 23S rRNA. Forms part of two intersubunit bridges in the 70S ribosome. The chain is Large ribosomal subunit protein uL14 from Mycoplasmopsis pulmonis (strain UAB CTIP) (Mycoplasma pulmonis).